Reading from the N-terminus, the 244-residue chain is High frequency lysogenization protein HflD homolog (244 aa).

It belongs to the HflD family.

Its subcellular location is the cytoplasm. The protein resides in the cell inner membrane. The polypeptide is High frequency lysogenization protein HflD homolog (Acinetobacter baumannii (strain SDF)).